Here is a 393-residue protein sequence, read N- to C-terminus: Phosphopentomutase (393 aa).

Residues D15, D288, H293, D329, H330, and H341 each coordinate Mn(2+).

Belongs to the phosphopentomutase family. Mn(2+) is required as a cofactor.

Its subcellular location is the cytoplasm. It catalyses the reaction 2-deoxy-alpha-D-ribose 1-phosphate = 2-deoxy-D-ribose 5-phosphate. It carries out the reaction alpha-D-ribose 1-phosphate = D-ribose 5-phosphate. The protein operates within carbohydrate degradation; 2-deoxy-D-ribose 1-phosphate degradation; D-glyceraldehyde 3-phosphate and acetaldehyde from 2-deoxy-alpha-D-ribose 1-phosphate: step 1/2. In terms of biological role, isomerase that catalyzes the conversion of deoxy-ribose 1-phosphate (dRib-1-P) and ribose 1-phosphate (Rib-1-P) to deoxy-ribose 5-phosphate (dRib-5-P) and ribose 5-phosphate (Rib-5-P), respectively. This Halalkalibacterium halodurans (strain ATCC BAA-125 / DSM 18197 / FERM 7344 / JCM 9153 / C-125) (Bacillus halodurans) protein is Phosphopentomutase.